The chain runs to 145 residues: Superoxide dismutase [Mn/Fe] (145 aa).

The Fe(3+) site is built by H10 and H64. Positions 10 and 64 each coordinate Mn(2+).

This sequence belongs to the iron/manganese superoxide dismutase family. Mn(2+) is required as a cofactor. Fe(3+) serves as cofactor.

The enzyme catalyses 2 superoxide + 2 H(+) = H2O2 + O2. Destroys superoxide anion radicals which are normally produced within the cells and which are toxic to biological systems. Catalyzes the dismutation of superoxide anion radicals into O2 and H2O2 by successive reduction and oxidation of the transition metal ion at the active site. This Streptococcus parasanguinis protein is Superoxide dismutase [Mn/Fe] (sodA).